The chain runs to 306 residues: Phospho-N-acetylmuramoyl-pentapeptide-transferase (306 aa).

10 helical membrane-spanning segments follow: residues 1-21, 49-69, 75-95, 104-124, 130-150, 160-180, 182-202, 209-229, 234-254, and 284-304; these read MDIY…IIFP, GTPT…GLIL, LIFT…VSIV, AWQK…TILQ, IFGI…LVSG, GIDG…MFFS, SSME…FLVY, VFMG…YALM, LSLL…ILQV, and IVGV…AFFL.

The protein belongs to the glycosyltransferase 4 family. MraY subfamily. Requires Mg(2+) as cofactor.

The protein localises to the cell inner membrane. It catalyses the reaction UDP-N-acetyl-alpha-D-muramoyl-L-alanyl-gamma-D-glutamyl-meso-2,6-diaminopimeloyl-D-alanyl-D-alanine + di-trans,octa-cis-undecaprenyl phosphate = di-trans,octa-cis-undecaprenyl diphospho-N-acetyl-alpha-D-muramoyl-L-alanyl-D-glutamyl-meso-2,6-diaminopimeloyl-D-alanyl-D-alanine + UMP. It participates in cell wall biogenesis; peptidoglycan biosynthesis. Catalyzes the initial step of the lipid cycle reactions in the biosynthesis of the cell wall peptidoglycan: transfers peptidoglycan precursor phospho-MurNAc-pentapeptide from UDP-MurNAc-pentapeptide onto the lipid carrier undecaprenyl phosphate, yielding undecaprenyl-pyrophosphoryl-MurNAc-pentapeptide, known as lipid I. This is Phospho-N-acetylmuramoyl-pentapeptide-transferase from Fervidobacterium nodosum (strain ATCC 35602 / DSM 5306 / Rt17-B1).